We begin with the raw amino-acid sequence, 108 residues long: UPF0145 protein HDEF_1024 (108 aa).

The protein belongs to the UPF0145 family.

This is UPF0145 protein HDEF_1024 from Hamiltonella defensa subsp. Acyrthosiphon pisum (strain 5AT).